The primary structure comprises 466 residues: Ribulose bisphosphate carboxylase large chain (466 aa).

Lys-5 is modified (N6,N6,N6-trimethyllysine). Substrate-binding residues include Asn-114 and Thr-164. Lys-166 acts as the Proton acceptor in catalysis. Lys-168 is a substrate binding site. The Mg(2+) site is built by Lys-192, Asp-194, and Glu-195. At Lys-192 the chain carries N6-carboxylysine. Residue His-285 is the Proton acceptor of the active site. 3 residues coordinate substrate: Arg-286, His-318, and Ser-370.

This sequence belongs to the RuBisCO large chain family. Type I subfamily. Heterohexadecamer of 8 large chains and 8 small chains; disulfide-linked. The disulfide link is formed within the large subunit homodimers. Mg(2+) is required as a cofactor. Post-translationally, the disulfide bond which can form in the large chain dimeric partners within the hexadecamer appears to be associated with oxidative stress and protein turnover.

Its subcellular location is the plastid. It localises to the chloroplast. It carries out the reaction 2 (2R)-3-phosphoglycerate + 2 H(+) = D-ribulose 1,5-bisphosphate + CO2 + H2O. The enzyme catalyses D-ribulose 1,5-bisphosphate + O2 = 2-phosphoglycolate + (2R)-3-phosphoglycerate + 2 H(+). Its function is as follows. RuBisCO catalyzes two reactions: the carboxylation of D-ribulose 1,5-bisphosphate, the primary event in carbon dioxide fixation, as well as the oxidative fragmentation of the pentose substrate in the photorespiration process. Both reactions occur simultaneously and in competition at the same active site. The polypeptide is Ribulose bisphosphate carboxylase large chain (Drosera binata (Fork-leaved sundew)).